Reading from the N-terminus, the 304-residue chain is Haloalkane dehalogenase (304 aa).

The 113-residue stretch at Pro-42–Val-154 folds into the AB hydrolase-1 domain. Asp-114 (nucleophile) is an active-site residue. The active-site Proton donor is Glu-138. His-280 acts as the Proton acceptor in catalysis.

This sequence belongs to the haloalkane dehalogenase family. Type 2 subfamily. Monomer.

It carries out the reaction 1-haloalkane + H2O = a halide anion + a primary alcohol + H(+). Catalyzes hydrolytic cleavage of carbon-halogen bonds in halogenated aliphatic compounds, leading to the formation of the corresponding primary alcohols, halide ions and protons. In Agrobacterium fabrum (strain C58 / ATCC 33970) (Agrobacterium tumefaciens (strain C58)), this protein is Haloalkane dehalogenase.